Consider the following 254-residue polypeptide: 5'/3'-nucleotidase SurE (254 aa).

A divalent metal cation-binding residues include Asp9, Asp10, Ser40, and Asn93.

It belongs to the SurE nucleotidase family. It depends on a divalent metal cation as a cofactor.

It localises to the cytoplasm. It carries out the reaction a ribonucleoside 5'-phosphate + H2O = a ribonucleoside + phosphate. It catalyses the reaction a ribonucleoside 3'-phosphate + H2O = a ribonucleoside + phosphate. The enzyme catalyses [phosphate](n) + H2O = [phosphate](n-1) + phosphate + H(+). In terms of biological role, nucleotidase with a broad substrate specificity as it can dephosphorylate various ribo- and deoxyribonucleoside 5'-monophosphates and ribonucleoside 3'-monophosphates with highest affinity to 3'-AMP. Also hydrolyzes polyphosphate (exopolyphosphatase activity) with the preference for short-chain-length substrates (P20-25). Might be involved in the regulation of dNTP and NTP pools, and in the turnover of 3'-mononucleotides produced by numerous intracellular RNases (T1, T2, and F) during the degradation of various RNAs. The sequence is that of 5'/3'-nucleotidase SurE from Proteus mirabilis (strain HI4320).